Consider the following 314-residue polypeptide: Calcium homeostasis modulator protein 4 (314 aa).

The Cytoplasmic portion of the chain corresponds to 1–14 (MCPTLNNIVSSLQR). A helical membrane pass occupies residues 15 to 37 (NGIFINSLIAALTIGGQQLFSSS). Residues 38 to 48 (TFSCPCQVGKN) are Extracellular-facing. 2 disulfides stabilise this stretch: C41–C131 and C43–C162. A helical membrane pass occupies residues 49 to 71 (FYYGSAFLVIPALILLVAGFALR). The Cytoplasmic portion of the chain corresponds to 72 to 103 (SQMWTITGEYCCSCAPPYRRISPLECKLACLR). The chain crosses the membrane as a helical span at residues 104–129 (FFSITGRAVIAPLTWLAVTLLTGTYY). Over 130–183 (ECAASEFASVDHYPMFDNVSASKREEILAGFPCCRSAPSDVILVRDEIALLHRY) the chain is Extracellular. The helical transmembrane segment at 184–207 (QSQMLGWILITLATIAALVSCCVA) threads the bilayer. The Cytoplasmic portion of the chain corresponds to 208–314 (KCCSPLTSLQ…DRSRGIELKP (107 aa)).

This sequence belongs to the CALHM family. In terms of assembly, oligomerizes to form decameric and undecameric channels. Two hemichannels can assemble in a tail-to-tail manner to form a gap junction. In terms of tissue distribution, placenta.

The protein resides in the cell membrane. In terms of biological role, may assemble to form gap junction channel-like structures involved in intercellular communication. Channel gating and ion conductance are likely regulated by membrane lipids rather than by membrane depolarization or extracellular calcium levels. The chain is Calcium homeostasis modulator protein 4 from Homo sapiens (Human).